The primary structure comprises 97 residues: Aspartyl/glutamyl-tRNA(Asn/Gln) amidotransferase subunit C (97 aa).

The tract at residues 58–78 (LPQGRLRKDTPRDPLDRENAL) is disordered. The span at 63 to 77 (LRKDTPRDPLDRENA) shows a compositional bias: basic and acidic residues.

It belongs to the GatC family. As to quaternary structure, heterotrimer of A, B and C subunits.

It carries out the reaction L-glutamyl-tRNA(Gln) + L-glutamine + ATP + H2O = L-glutaminyl-tRNA(Gln) + L-glutamate + ADP + phosphate + H(+). The enzyme catalyses L-aspartyl-tRNA(Asn) + L-glutamine + ATP + H2O = L-asparaginyl-tRNA(Asn) + L-glutamate + ADP + phosphate + 2 H(+). Allows the formation of correctly charged Asn-tRNA(Asn) or Gln-tRNA(Gln) through the transamidation of misacylated Asp-tRNA(Asn) or Glu-tRNA(Gln) in organisms which lack either or both of asparaginyl-tRNA or glutaminyl-tRNA synthetases. The reaction takes place in the presence of glutamine and ATP through an activated phospho-Asp-tRNA(Asn) or phospho-Glu-tRNA(Gln). The protein is Aspartyl/glutamyl-tRNA(Asn/Gln) amidotransferase subunit C of Saccharolobus islandicus (strain Y.N.15.51 / Yellowstone #2) (Sulfolobus islandicus).